Here is a 305-residue protein sequence, read N- to C-terminus: Glycine--tRNA ligase alpha subunit (305 aa).

Belongs to the class-II aminoacyl-tRNA synthetase family. In terms of assembly, tetramer of two alpha and two beta subunits.

The protein resides in the cytoplasm. The enzyme catalyses tRNA(Gly) + glycine + ATP = glycyl-tRNA(Gly) + AMP + diphosphate. The chain is Glycine--tRNA ligase alpha subunit from Streptococcus pyogenes serotype M18 (strain MGAS8232).